Consider the following 361-residue polypeptide: Small ribosomal subunit protein mS46 (361 aa).

The transit peptide at 1–14 directs the protein to the mitochondrion; sequence MRSSMFRCVSRAHY. The interval 37–99 is disordered; sequence ASSNALKLDK…SDSVRANKQQ (63 aa). Positions 43 to 52 are enriched in basic and acidic residues; sequence KLDKMKEGRM. Residues 59 to 68 show a composition bias toward low complexity; it reads GNQNRNSMNN. Residues 69-91 show a composition bias toward basic and acidic residues; the sequence is KESRGREGNQGERNMRLKNRSSD.

The protein belongs to the mitochondrion-specific ribosomal protein mS46 family. As to quaternary structure, component of the mitochondrial small ribosomal subunit (mt-SSU). Mature yeast 74S mitochondrial ribosomes consist of a small (37S) and a large (54S) subunit. The 37S small subunit contains a 15S ribosomal RNA (15S mt-rRNA) and 34 different proteins. The 54S large subunit contains a 21S rRNA (21S mt-rRNA) and 46 different proteins.

The protein resides in the mitochondrion. Functionally, component of the mitochondrial ribosome (mitoribosome), a dedicated translation machinery responsible for the synthesis of mitochondrial genome-encoded proteins, including at least some of the essential transmembrane subunits of the mitochondrial respiratory chain. The mitoribosomes are attached to the mitochondrial inner membrane and translation products are cotranslationally integrated into the membrane. In Saccharomyces cerevisiae (strain ATCC 204508 / S288c) (Baker's yeast), this protein is Small ribosomal subunit protein mS46 (RSM28).